Here is a 657-residue protein sequence, read N- to C-terminus: Pentatricopeptide repeat-containing protein At5g44230 (657 aa).

PPR repeat units follow at residues 45 to 79 (KELL…GLDQ), 80 to 112 (SCYI…VQFR), 113 to 147 (NPFL…EITP), 148 to 178 (VSFT…TFRL), 183 to 213 (FVYV…MPER), 214 to 244 (DVIS…LPTK), 245 to 279 (DMVA…GIRA), 280 to 314 (DEVT…GYSP), 317 to 347 (HVVI…MNNK), 348 to 383 (NVFT…EIKP), 384 to 419 (NTVT…GVQP), and 420 to 450 (TRDH…MSVE). Residues 455 to 530 (VWGALLGACR…TPAVSWVVDK (76 aa)) are type E motif. Residues 532–562 (GQMHKFFPGNLNHPMSNKIQDKLEELVERLT) are type E(+) motif. The type DYW motif stretch occupies residues 563 to 657 (VLGYQPDLSS…SGDCSCGDFW (95 aa)).

This sequence belongs to the PPR family. PCMP-H subfamily.

The protein is Pentatricopeptide repeat-containing protein At5g44230 (PCMP-H17) of Arabidopsis thaliana (Mouse-ear cress).